The following is a 122-amino-acid chain: Large ribosomal subunit protein bL12 (122 aa).

It belongs to the bacterial ribosomal protein bL12 family. In terms of assembly, homodimer. Part of the ribosomal stalk of the 50S ribosomal subunit. Forms a multimeric L10(L12)X complex, where L10 forms an elongated spine to which 2 to 4 L12 dimers bind in a sequential fashion. Binds GTP-bound translation factors.

Its function is as follows. Forms part of the ribosomal stalk which helps the ribosome interact with GTP-bound translation factors. Is thus essential for accurate translation. This is Large ribosomal subunit protein bL12 from Staphylococcus saprophyticus subsp. saprophyticus (strain ATCC 15305 / DSM 20229 / NCIMB 8711 / NCTC 7292 / S-41).